Reading from the N-terminus, the 183-residue chain is ATP-dependent protease subunit HslV (183 aa).

Threonine 13 is an active-site residue. Residues glycine 168, cysteine 171, and threonine 174 each contribute to the Na(+) site.

This sequence belongs to the peptidase T1B family. HslV subfamily. In terms of assembly, a double ring-shaped homohexamer of HslV is capped on each side by a ring-shaped HslU homohexamer. The assembly of the HslU/HslV complex is dependent on binding of ATP.

It is found in the cytoplasm. The enzyme catalyses ATP-dependent cleavage of peptide bonds with broad specificity.. With respect to regulation, allosterically activated by HslU binding. Its function is as follows. Protease subunit of a proteasome-like degradation complex believed to be a general protein degrading machinery. The polypeptide is ATP-dependent protease subunit HslV (Stenotrophomonas maltophilia (strain R551-3)).